Consider the following 337-residue polypeptide: Heat-inducible transcription repressor HrcA (337 aa).

It belongs to the HrcA family.

In terms of biological role, negative regulator of class I heat shock genes (grpE-dnaK-dnaJ and groELS operons). Prevents heat-shock induction of these operons. The sequence is that of Heat-inducible transcription repressor HrcA from Polaromonas naphthalenivorans (strain CJ2).